Reading from the N-terminus, the 273-residue chain is Eukaryotic translation initiation factor 3 subunit G-2 (273 aa).

The RRM domain occupies 193–271 (SAVRISNLSE…LILCVEWSKP (79 aa)).

Belongs to the eIF-3 subunit G family. Component of the eukaryotic translation initiation factor 3 (eIF-3) complex. The eIF-3 complex interacts with pix.

The protein localises to the cytoplasm. In terms of biological role, RNA-binding component of the eukaryotic translation initiation factor 3 (eIF-3) complex, which is involved in protein synthesis of a specialized repertoire of mRNAs and, together with other initiation factors, stimulates binding of mRNA and methionyl-tRNAi to the 40S ribosome. The eIF-3 complex specifically targets and initiates translation of a subset of mRNAs involved in cell proliferation. This subunit can bind 18S rRNA. In Drosophila melanogaster (Fruit fly), this protein is Eukaryotic translation initiation factor 3 subunit G-2.